A 248-amino-acid chain; its full sequence is Phosphoribosylaminoimidazole-succinocarboxamide synthase (248 aa).

The protein belongs to the SAICAR synthetase family.

It catalyses the reaction 5-amino-1-(5-phospho-D-ribosyl)imidazole-4-carboxylate + L-aspartate + ATP = (2S)-2-[5-amino-1-(5-phospho-beta-D-ribosyl)imidazole-4-carboxamido]succinate + ADP + phosphate + 2 H(+). Its pathway is purine metabolism; IMP biosynthesis via de novo pathway; 5-amino-1-(5-phospho-D-ribosyl)imidazole-4-carboxamide from 5-amino-1-(5-phospho-D-ribosyl)imidazole-4-carboxylate: step 1/2. This chain is Phosphoribosylaminoimidazole-succinocarboxamide synthase (purC), found in Methanothermobacter thermautotrophicus (strain ATCC 29096 / DSM 1053 / JCM 10044 / NBRC 100330 / Delta H) (Methanobacterium thermoautotrophicum).